The following is a 50-amino-acid chain: Toxic protein HokC (50 aa).

The Cytoplasmic segment spans residues 1–5 (MKQHK). The helical; Signal-anchor for type II membrane protein transmembrane segment at 6–24 (AMIVALIVICITAVVAALV) threads the bilayer. Residues 25-50 (TRKDLCEVHIRTGQTEVAVFTAYESE) lie on the Periplasmic side of the membrane.

The protein belongs to the Hok/Gef family. Homodimer; disulfide-linked.

The protein resides in the cell inner membrane. Functionally, toxic component of a type I toxin-antitoxin (TA) system. When overexpressed kills cells within minutes; causes collapse of the transmembrane potential and arrest of respiration. Its toxic effect is probably neutralized by antisense antitoxin RNA SokC. The chain is Toxic protein HokC from Escherichia coli (strain K12).